Here is a 386-residue protein sequence, read N- to C-terminus: DNA replication and repair protein RecF (386 aa).

Residue 30–37 (GSNGFGKT) participates in ATP binding.

Belongs to the RecF family.

The protein localises to the cytoplasm. In terms of biological role, the RecF protein is involved in DNA metabolism; it is required for DNA replication and normal SOS inducibility. RecF binds preferentially to single-stranded, linear DNA. It also seems to bind ATP. The sequence is that of DNA replication and repair protein RecF from Mycolicibacterium vanbaalenii (strain DSM 7251 / JCM 13017 / BCRC 16820 / KCTC 9966 / NRRL B-24157 / PYR-1) (Mycobacterium vanbaalenii).